Reading from the N-terminus, the 209-residue chain is ATP phosphoribosyltransferase (209 aa).

The protein belongs to the ATP phosphoribosyltransferase family. Short subfamily. As to quaternary structure, heteromultimer composed of HisG and HisZ subunits.

Its subcellular location is the cytoplasm. It carries out the reaction 1-(5-phospho-beta-D-ribosyl)-ATP + diphosphate = 5-phospho-alpha-D-ribose 1-diphosphate + ATP. The protein operates within amino-acid biosynthesis; L-histidine biosynthesis; L-histidine from 5-phospho-alpha-D-ribose 1-diphosphate: step 1/9. Catalyzes the condensation of ATP and 5-phosphoribose 1-diphosphate to form N'-(5'-phosphoribosyl)-ATP (PR-ATP). Has a crucial role in the pathway because the rate of histidine biosynthesis seems to be controlled primarily by regulation of HisG enzymatic activity. The chain is ATP phosphoribosyltransferase from Alkaliphilus metalliredigens (strain QYMF).